The following is a 637-amino-acid chain: Mitochondrial Rho GTPase 1 (637 aa).

Residues 1 to 613 (MSDGETLADV…LRRVFYLSDS (613 aa)) are Cytoplasmic-facing. The region spanning 7–184 (LADVRIVLIG…FYYAQKAVIY (178 aa)) is the Miro 1 domain. GTP contacts are provided by residues 28–35 (SLLEDEWV), 74–78 (ISEMR), and 135–138 (LPSG). EF-hand domains follow at residues 200–235 (RAKK…CFGI) and 320–355 (EGVQ…CSAP). Ca(2+) is bound by residues Asp213, Asp215, Asp217, Tyr219, Glu224, Asp333, Asp335, Asp337, Cys339, and Glu344. The Miro 2 domain occupies 436-601 (RKVFQCLVVG…FEQLAMMAVY (166 aa)). Residues 445 to 452 (GAKDAGKT), 482 to 486 (KVKEE), and 549 to 552 (TKVE) each bind GTP. Residues 614–634 (NLLSKITFGAAIVALAGFLVL) traverse the membrane as a helical; Anchor for type IV membrane protein segment. Residues 635–637 (KNL) lie on the Mitochondrial intermembrane side of the membrane.

This sequence belongs to the mitochondrial Rho GTPase family.

Its subcellular location is the mitochondrion outer membrane. In terms of biological role, mitochondrial GTPase involved in mitochondrial trafficking. Probably involved in control of anterograde transport of mitochondria and their subcellular distribution. This Caenorhabditis briggsae protein is Mitochondrial Rho GTPase 1.